Reading from the N-terminus, the 99-residue chain is Small ribosomal subunit protein bS18 (99 aa).

Residues 1–25 (MAESKGRPGSASQRPTGGDKAIAGQ) form a disordered region.

Belongs to the bacterial ribosomal protein bS18 family. Part of the 30S ribosomal subunit. Forms a tight heterodimer with protein bS6.

Binds as a heterodimer with protein bS6 to the central domain of the 16S rRNA, where it helps stabilize the platform of the 30S subunit. The sequence is that of Small ribosomal subunit protein bS18 from Solibacter usitatus (strain Ellin6076).